The chain runs to 286 residues: MSAKLINGKEIAAQVRQQVAAGVEARKQKGLRAPGLAVVLVGHDPASQVYVGNKRKACEQAGILSLSYDLPEDTSQAALEALVDELNENPAVDGILVQLPLPSHLDADPILVKIRPDKDVDGFHPYNIGRLMQRKPTLRPCTPAGVITLLDSIGTPYKGQHAVIVGASNIVGRPMSMELLLKGATTTVCHRFTDNLEKFVGEADILVAAVGKPGIIKGEWVKPGATVIDVGINRMDDGKLCGDVDFDAAAERAAYITPVPGGVGPMTIATLLENTLYAANVLHADT.

Residues 166 to 168 (GAS) and isoleucine 232 each bind NADP(+).

It belongs to the tetrahydrofolate dehydrogenase/cyclohydrolase family. Homodimer.

It catalyses the reaction (6R)-5,10-methylene-5,6,7,8-tetrahydrofolate + NADP(+) = (6R)-5,10-methenyltetrahydrofolate + NADPH. It carries out the reaction (6R)-5,10-methenyltetrahydrofolate + H2O = (6R)-10-formyltetrahydrofolate + H(+). The protein operates within one-carbon metabolism; tetrahydrofolate interconversion. Functionally, catalyzes the oxidation of 5,10-methylenetetrahydrofolate to 5,10-methenyltetrahydrofolate and then the hydrolysis of 5,10-methenyltetrahydrofolate to 10-formyltetrahydrofolate. In Marinobacter nauticus (strain ATCC 700491 / DSM 11845 / VT8) (Marinobacter aquaeolei), this protein is Bifunctional protein FolD.